A 1169-amino-acid chain; its full sequence is MEINNQNQCVPYNCLNNPESEILNVAIFSSEQVAEIHLKITRLILENFLPGGSFAFGLFDLIWGIFNEDQWSAFLRQVEELINQRITEFARGQAIQRLVGFGRSYDEYILALKEWENDPDNPASKERVRTRFRTTDDALLTGVPLMAIPGFELATLSVYAQSANLHLALLRDAVFFGERWGLTQTNINDLYSRLKNSIRDYTNHCVRFYNIGLGNLNVIRPEYYRFQRELTISVLDLVALFPNYDIRTYPIPTKSQLTREIYTDPIISPGAQAGYTLQDVLREPHLMDFLNRLIIYTGEYRGIRHWAGHEVESSRTGMMTNIRFPLYGTAATAEPTRFITPSTFPGLNLFYRTLSAPIFRDEPGANIIIRYRTSLVEGVGFIQPNNGEQLYRVRGTLDSLDQLPLEGESSLTEYSHRLCHVRFAQSLRNAEPLDYARVPMFSWTHRSATPTNTIDPDVITQIPLVKAFNLHSGATVVRGPGFTGGDILRRTNAGNFGDMRVNITAPLSQRYRVRIRYASTANLQFHTSINGRAINQANFPATMNSGENLQSGSFRVAGFTTPFTFSDALSTFTIGAFSFSSNNEVYIDGIEFVPAEVTFATESDQDRAQKAVNALFTSSNQIGLKTDVTNYHIDQVSNLVECLSDEFCLDEKRELSEKVKHAKRLCDERNLLQDPNFRGINREPDRGWRGSTDITIQRGDDVFKENYVTLPGTFDECYPTYLYQKIDESKLKAYTRYELRGYIEDSQDLEIYLIRYNAKHETVNVPGTGSLWPLSAQSPIGKCGEPNRCATHLEWNPDLDCSCRDGEKCAHHSHHFSLDIDVGCTDLNEDLGVWVIFKIKTQDGHARLGNLEFLEEKPLLGEALARVKRAEKKWRDKREKLELETNIVYKEAKKSVDALFVNSQYDRLQADTNIAIIHAADKRVHSIREAYLPELSVIPGVNAAIFEELEGRIFTAYSLYDARNVIKNGDFNNGLSCWNVKGHVDVEEQNNHRSVLVVPEWEAEVSQEVRVCPGRGYILRVTAYKEGYGEGCVTIHEIEDNTDELKFSNCVEEEIYPNNTVTCNDYTATQEEYEGTYTSRNRGYDGAYESNSSVPADYASAYEEKAYTDGRRDNTCESNRGYGDYTPLPAGYVTKELEYFPETDKVWIEIGETEGTFIVDSVELLLMEE.

Belongs to the delta endotoxin family.

Its function is as follows. Promotes colloidosmotic lysis by binding to the midgut epithelial cells of lepidopteran larvae. Toxic to Pieris rapae. In Bacillus thuringiensis subsp. wuhanensis, this protein is Pesticidal crystal protein Cry1Gb (cry1Gb).